The sequence spans 354 residues: Uroporphyrinogen decarboxylase (354 aa).

Residues 27-31 (RQAGR), aspartate 77, tyrosine 154, serine 209, and histidine 327 contribute to the substrate site.

This sequence belongs to the uroporphyrinogen decarboxylase family. Homodimer.

The protein resides in the cytoplasm. The enzyme catalyses uroporphyrinogen III + 4 H(+) = coproporphyrinogen III + 4 CO2. It participates in porphyrin-containing compound metabolism; protoporphyrin-IX biosynthesis; coproporphyrinogen-III from 5-aminolevulinate: step 4/4. Functionally, catalyzes the decarboxylation of four acetate groups of uroporphyrinogen-III to yield coproporphyrinogen-III. The protein is Uroporphyrinogen decarboxylase of Shewanella amazonensis (strain ATCC BAA-1098 / SB2B).